The following is a 338-amino-acid chain: Nicotinate-nucleotide--dimethylbenzimidazole phosphoribosyltransferase (338 aa).

Glutamate 306 acts as the Proton acceptor in catalysis.

It belongs to the CobT family.

The enzyme catalyses 5,6-dimethylbenzimidazole + nicotinate beta-D-ribonucleotide = alpha-ribazole 5'-phosphate + nicotinate + H(+). The protein operates within nucleoside biosynthesis; alpha-ribazole biosynthesis; alpha-ribazole from 5,6-dimethylbenzimidazole: step 1/2. Its function is as follows. Catalyzes the synthesis of alpha-ribazole-5'-phosphate from nicotinate mononucleotide (NAMN) and 5,6-dimethylbenzimidazole (DMB). This Cereibacter sphaeroides (strain KD131 / KCTC 12085) (Rhodobacter sphaeroides) protein is Nicotinate-nucleotide--dimethylbenzimidazole phosphoribosyltransferase.